Consider the following 224-residue polypeptide: Biosynthetic peptidoglycan transglycosylase (224 aa).

A helical membrane pass occupies residues Ile-12–Val-32.

This sequence belongs to the glycosyltransferase 51 family.

The protein resides in the cell inner membrane. It carries out the reaction [GlcNAc-(1-&gt;4)-Mur2Ac(oyl-L-Ala-gamma-D-Glu-L-Lys-D-Ala-D-Ala)](n)-di-trans,octa-cis-undecaprenyl diphosphate + beta-D-GlcNAc-(1-&gt;4)-Mur2Ac(oyl-L-Ala-gamma-D-Glu-L-Lys-D-Ala-D-Ala)-di-trans,octa-cis-undecaprenyl diphosphate = [GlcNAc-(1-&gt;4)-Mur2Ac(oyl-L-Ala-gamma-D-Glu-L-Lys-D-Ala-D-Ala)](n+1)-di-trans,octa-cis-undecaprenyl diphosphate + di-trans,octa-cis-undecaprenyl diphosphate + H(+). It participates in cell wall biogenesis; peptidoglycan biosynthesis. In terms of biological role, peptidoglycan polymerase that catalyzes glycan chain elongation from lipid-linked precursors. The chain is Biosynthetic peptidoglycan transglycosylase from Brucella melitensis biotype 1 (strain ATCC 23456 / CCUG 17765 / NCTC 10094 / 16M).